Here is a 124-residue protein sequence, read N- to C-terminus: Small ribosomal subunit protein bS16 (124 aa).

The segment covering 81–90 (LKKRPARNNP) has biased composition (basic residues). The disordered stretch occupies residues 81–124 (LKKRPARNNPHKGEPGKKAQERIAAAKQAAEDAAAAAEADSASE). The span at 91–101 (HKGEPGKKAQE) shows a compositional bias: basic and acidic residues. A compositionally biased stretch (low complexity) spans 102 to 124 (RIAAAKQAAEDAAAAAEADSASE).

The protein belongs to the bacterial ribosomal protein bS16 family.

This is Small ribosomal subunit protein bS16 from Bartonella tribocorum (strain CIP 105476 / IBS 506).